We begin with the raw amino-acid sequence, 429 residues long: uncharacterized protein (429 aa).

Residues Ser116, Asp179, and His206 each act as charge relay system in the active site.

This sequence belongs to the AB hydrolase 3 family.

Its subcellular location is the cytoplasm. The protein resides in the nucleus. This is an uncharacterized protein from Schizosaccharomyces pombe (strain 972 / ATCC 24843) (Fission yeast).